The primary structure comprises 438 residues: Enolase (438 aa).

(2R)-2-phosphoglycerate is bound at residue Gln164. The active-site Proton donor is Glu206. Residues Asp243, Glu289, and Asp316 each contribute to the Mg(2+) site. Residues Lys341, Arg370, Ser371, and Lys392 each coordinate (2R)-2-phosphoglycerate. Lys341 functions as the Proton acceptor in the catalytic mechanism.

This sequence belongs to the enolase family. It depends on Mg(2+) as a cofactor.

It is found in the cytoplasm. It localises to the secreted. The protein resides in the cell surface. It catalyses the reaction (2R)-2-phosphoglycerate = phosphoenolpyruvate + H2O. Its pathway is carbohydrate degradation; glycolysis; pyruvate from D-glyceraldehyde 3-phosphate: step 4/5. In terms of biological role, catalyzes the reversible conversion of 2-phosphoglycerate (2-PG) into phosphoenolpyruvate (PEP). It is essential for the degradation of carbohydrates via glycolysis. The protein is Enolase of Borrelia garinii subsp. bavariensis (strain ATCC BAA-2496 / DSM 23469 / PBi) (Borreliella bavariensis).